The following is a 188-amino-acid chain: dCTP deaminase (188 aa).

Residues 111-116 (KSTYAR), 135-137 (TLE), glutamine 156, tyrosine 170, and glutamine 180 each bind dCTP. Glutamate 137 (proton donor/acceptor) is an active-site residue.

It belongs to the dCTP deaminase family. In terms of assembly, homotrimer.

The catalysed reaction is dCTP + H2O + H(+) = dUTP + NH4(+). Its pathway is pyrimidine metabolism; dUMP biosynthesis; dUMP from dCTP (dUTP route): step 1/2. Functionally, catalyzes the deamination of dCTP to dUTP. This is dCTP deaminase from Pseudomonas syringae pv. tomato (strain ATCC BAA-871 / DC3000).